Consider the following 906-residue polypeptide: Protein translocase subunit SecA (906 aa).

Residues Gln-87, 105–109 (GEGKT), and Asp-513 each bind ATP. The interval 860 to 906 (QVNKGEVVSDENTGDDTFVRNEKKVGRNEPCPCGSGKKYKQCHGKLD) is disordered. Basic and acidic residues predominate over residues 876 to 886 (TFVRNEKKVGR). 4 residues coordinate Zn(2+): Cys-890, Cys-892, Cys-901, and His-902. Positions 896 to 906 (KKYKQCHGKLD) are enriched in basic residues.

The protein belongs to the SecA family. Monomer and homodimer. Part of the essential Sec protein translocation apparatus which comprises SecA, SecYEG and auxiliary proteins SecDF-YajC and YidC. It depends on Zn(2+) as a cofactor.

It localises to the cell inner membrane. It is found in the cytoplasm. The catalysed reaction is ATP + H2O + cellular proteinSide 1 = ADP + phosphate + cellular proteinSide 2.. Part of the Sec protein translocase complex. Interacts with the SecYEG preprotein conducting channel. Has a central role in coupling the hydrolysis of ATP to the transfer of proteins into and across the cell membrane, serving both as a receptor for the preprotein-SecB complex and as an ATP-driven molecular motor driving the stepwise translocation of polypeptide chains across the membrane. In Psychromonas ingrahamii (strain DSM 17664 / CCUG 51855 / 37), this protein is Protein translocase subunit SecA.